Consider the following 538-residue polypeptide: Pentachlorophenol 4-monooxygenase (538 aa).

FAD-binding positions include 16 to 45 (AVLI…MIDR) and 288 to 298 (YRKGNVFLAGD).

Belongs to the PheA/TfdB FAD monooxygenase family. In terms of assembly, homodimer. FAD is required as a cofactor.

It catalyses the reaction pentachlorophenol + NADPH + O2 + H(+) = 2,3,5,6-tetrachloro-1,4-benzoquinone + chloride + NADP(+) + H2O. It carries out the reaction 2,3,5,6-tetrachlorophenol + NADPH + O2 = 2,3,5,6-tetrachlorohydroquinone + NADP(+) + H2O. The protein operates within xenobiotic degradation; pentachlorophenol degradation. Dechlorination of pentachlorophenol to tetrachlorobenzoquinone. Also removes hydrogen and nitro, amino, and cyano groups from benzene ring at the para position in relation to the hydroxyl of phenol. The polypeptide is Pentachlorophenol 4-monooxygenase (pcpB) (Sphingobium chlorophenolicum).